Here is a 203-residue protein sequence, read N- to C-terminus: Cilia- and flagella-associated protein 20 (203 aa).

This sequence belongs to the CFAP20 family.

It is found in the nucleus. It localises to the cytoplasm. Its subcellular location is the cytoskeleton. The protein resides in the microtubule organizing center. The protein localises to the centrosome. It is found in the centriole. It localises to the cilium basal body. Its subcellular location is the cilium axoneme. Cilium- and flagellum-specific protein that plays a role in axonemal structure organization and motility. Microtubule inner protein (MIP) part of the dynein-decorated doublet microtubules (DMTs) in cilia axoneme, which is required for motile cilia beating. Involved in the regulation of the size and morphology of cilia. Required for axonemal microtubules polyglutamylation. The chain is Cilia- and flagella-associated protein 20 from Caenorhabditis elegans.